We begin with the raw amino-acid sequence, 664 residues long: RNA-binding protein RMD9, mitochondrial (664 aa).

The transit peptide at Met-1–Phe-32 directs the protein to the mitochondrion. The interval Leu-38–Asn-68 is disordered. The span at Ser-55–Asn-68 shows a compositional bias: basic and acidic residues.

This sequence belongs to the RMD9 family. Monomer. Phosphorylated. Phosphorylation promotes binding to RNA.

Its subcellular location is the mitochondrion inner membrane. In terms of biological role, binds the 3'-UTR of mitochondrial mRNAs. Involved in the processing or stability of mitochondrial mRNAs. The protein is RNA-binding protein RMD9, mitochondrial (RMD9) of Kluyveromyces lactis (strain ATCC 8585 / CBS 2359 / DSM 70799 / NBRC 1267 / NRRL Y-1140 / WM37) (Yeast).